A 1070-amino-acid polypeptide reads, in one-letter code: Potassium/chloride cotransporter 3 (1070 aa).

15 helical membrane-spanning segments follow: residues 92 to 112, 114 to 134, 142 to 162, 174 to 194, 196 to 216, 228 to 248, 251 to 271, 400 to 420, 433 to 453, 473 to 493, 534 to 554, 557 to 577, 600 to 620, 791 to 811, and 827 to 847; these read GVML…TMFI, LFWV…AICC, ISLS…YFII, VGIL…VGGV, VILM…LHDT, LYGT…VKFV, LAPV…GGGI, FFML…GTNM, VGTI…AILF, TMVV…GAFL, PFLG…LGAV, IAEV…LIAV, LLGA…LACI, LVLF…LIVT, and FIDI…AYLL.

In terms of tissue distribution, expressed in the amphid sheath glia and the cephalic sheath glia. Also expressed in the inner labial and outer labial sheath and socket glia and as well as phasmid sheath glia.

The protein resides in the cell membrane. Probable potassium/chloride cotransporter that functions in the amphid sheath glial cells to regulate thermotaxis behavior. By maintaining chloride homeostasis, negatively regulates guanylate cyclase gcy-8 in the thermosensory AFD neurons and thereby controls the microvilli receptive ending morphology of the AFD neurons and thermotaxis. Modulates the temperature-evoked neuronal activity of the AFD neurons such as calcium responses to temperature gradients. Might also play a role in the chemotaxis behavior mediated by the sensory neurons AWA and AWC. The sequence is that of Potassium/chloride cotransporter 3 (kcc-3) from Caenorhabditis elegans.